The chain runs to 422 residues: Zinc finger protein zfp-2 (422 aa).

The interval 95 to 119 (AIPCTSSSMQPSTSSNPSSGEHQPV) is disordered. Positions 99–113 (TSSSMQPSTSSNPSS) are enriched in low complexity. 7 consecutive C2H2-type zinc fingers follow at residues 171 to 194 (YRCTNCKTYFGNKEVYQRHIQEVH), 200 to 222 (FRCFNCGMRFANKTSMTHHLKDH), 229 to 251 (FSCDYCPRIFSKLESKTRHHKMH), 255 to 278 (STCQTCMRFFTTEDALRHHQSTAH), 300 to 322 (YSCSYCNLRFHFKKDMLVHERIH), 328 to 350 (YSCGYCMKSFAQSQALTAHIRTH), and 356 to 379 (YGCGKCDKRFRDNSCLRKHELAAH).

Expressed in vulval cells and all somatic gonad structures such as spermatheca, sheath cells, uterine cells and distal tip cells.

Its subcellular location is the nucleus. In terms of biological role, probable zinc finger transcription factor that acts as a transcriptional repressor. Acts redundantly with the transcriptional repressor lin-35 to control the development of somatic gonad lineages. May, in addition, suppress sensitivity to RNAi. This chain is Zinc finger protein zfp-2, found in Caenorhabditis elegans.